The following is a 270-amino-acid chain: tRNA pseudouridine synthase A (270 aa).

Asp60 functions as the Nucleophile in the catalytic mechanism. Tyr118 provides a ligand contact to substrate.

Belongs to the tRNA pseudouridine synthase TruA family. In terms of assembly, homodimer.

It carries out the reaction uridine(38/39/40) in tRNA = pseudouridine(38/39/40) in tRNA. Formation of pseudouridine at positions 38, 39 and 40 in the anticodon stem and loop of transfer RNAs. This is tRNA pseudouridine synthase A from Salmonella arizonae (strain ATCC BAA-731 / CDC346-86 / RSK2980).